Reading from the N-terminus, the 149-residue chain is Urease accessory protein UreE (149 aa).

This sequence belongs to the UreE family.

Its subcellular location is the cytoplasm. Its function is as follows. Involved in urease metallocenter assembly. Binds nickel. Probably functions as a nickel donor during metallocenter assembly. In Prochlorococcus marinus (strain AS9601), this protein is Urease accessory protein UreE.